Here is a 366-residue protein sequence, read N- to C-terminus: Cobalt-precorrin-5B C(1)-methyltransferase (366 aa).

This sequence belongs to the CbiD family.

The catalysed reaction is Co-precorrin-5B + S-adenosyl-L-methionine = Co-precorrin-6A + S-adenosyl-L-homocysteine. It participates in cofactor biosynthesis; adenosylcobalamin biosynthesis; cob(II)yrinate a,c-diamide from sirohydrochlorin (anaerobic route): step 6/10. Its function is as follows. Catalyzes the methylation of C-1 in cobalt-precorrin-5B to form cobalt-precorrin-6A. The protein is Cobalt-precorrin-5B C(1)-methyltransferase of Pseudomonas aeruginosa (strain UCBPP-PA14).